We begin with the raw amino-acid sequence, 553 residues long: Cysteine desulfurase IscS (553 aa).

A compositionally biased stretch (low complexity) spans 102-122 (NNISSNNTQYNNNSSNSGSLN). The disordered stretch occupies residues 102–125 (NNISSNNTQYNNNSSNSGSLNDEG).

The protein belongs to the class-V pyridoxal-phosphate-dependent aminotransferase family. NifS/IscS subfamily. As to quaternary structure, homotetramer. Interacts with Isd11; the interaction enhances cysteine desulfurase activity of IscS. Interacts with IscU. Component of a complex, at least composed of IscS, Isd11 and IscU. Requires pyridoxal 5'-phosphate as cofactor.

Its subcellular location is the mitochondrion. The catalysed reaction is (sulfur carrier)-H + L-cysteine = (sulfur carrier)-SH + L-alanine. It participates in cofactor biosynthesis; iron-sulfur cluster biosynthesis. Catalyzes sulfur activation and mobilization in iron-sulfur cluster formation (ISC) pathway for iron-sulfur (Fe-S) cluster biogenesis. Active when in complex with a partner protein Isd11. The sequence is that of Cysteine desulfurase IscS from Plasmodium falciparum (isolate 3D7).